The chain runs to 507 residues: Maturase K (507 aa).

Belongs to the intron maturase 2 family. MatK subfamily.

It is found in the plastid. The protein localises to the chloroplast. Usually encoded in the trnK tRNA gene intron. Probably assists in splicing its own and other chloroplast group II introns. In Fagopyrum tataricum (Tartarian buckwheat), this protein is Maturase K.